The chain runs to 695 residues: Probable pre-mRNA-splicing factor ATP-dependent RNA helicase DEAH9 (695 aa).

Positions 58 to 223 (LYLVENHATT…FNSSKKRHAP (166 aa)) constitute a Helicase ATP-binding domain. 71–78 (GETGSGKT) provides a ligand contact to ATP. The short motif at 170-173 (DEAH) is the DEAH box element. A Helicase C-terminal domain is found at 261–438 (SVVSTILLIN…STVIQLKALG (178 aa)).

This sequence belongs to the DEAD box helicase family. DEAH subfamily. DDX35 sub-subfamily.

It catalyses the reaction ATP + H2O = ADP + phosphate + H(+). Functionally, may be involved in pre-mRNA splicing. The protein is Probable pre-mRNA-splicing factor ATP-dependent RNA helicase DEAH9 of Arabidopsis thaliana (Mouse-ear cress).